The chain runs to 310 residues: Ribosomal RNA small subunit methyltransferase H (310 aa).

S-adenosyl-L-methionine-binding positions include 32–34 (GGH), D52, F79, D100, and Q107.

It belongs to the methyltransferase superfamily. RsmH family.

The protein resides in the cytoplasm. The catalysed reaction is cytidine(1402) in 16S rRNA + S-adenosyl-L-methionine = N(4)-methylcytidine(1402) in 16S rRNA + S-adenosyl-L-homocysteine + H(+). Functionally, specifically methylates the N4 position of cytidine in position 1402 (C1402) of 16S rRNA. This chain is Ribosomal RNA small subunit methyltransferase H, found in Bacillus cereus (strain ATCC 10987 / NRS 248).